The following is a 556-amino-acid chain: Phosphomethylpyrimidine synthase (556 aa).

Substrate-binding positions include Asn191, Met220, Tyr249, His285, 305 to 307 (SRG), 346 to 349 (DALR), and Glu385. A Zn(2+)-binding site is contributed by His389. Tyr412 serves as a coordination point for substrate. His453 serves as a coordination point for Zn(2+). [4Fe-4S] cluster contacts are provided by Cys535, Cys538, and Cys543.

Belongs to the ThiC family. Requires [4Fe-4S] cluster as cofactor.

It catalyses the reaction 5-amino-1-(5-phospho-beta-D-ribosyl)imidazole + S-adenosyl-L-methionine = 4-amino-2-methyl-5-(phosphooxymethyl)pyrimidine + CO + 5'-deoxyadenosine + formate + L-methionine + 3 H(+). Its pathway is cofactor biosynthesis; thiamine diphosphate biosynthesis. In terms of biological role, catalyzes the synthesis of the hydroxymethylpyrimidine phosphate (HMP-P) moiety of thiamine from aminoimidazole ribotide (AIR) in a radical S-adenosyl-L-methionine (SAM)-dependent reaction. The sequence is that of Phosphomethylpyrimidine synthase from Chlorobaculum tepidum (strain ATCC 49652 / DSM 12025 / NBRC 103806 / TLS) (Chlorobium tepidum).